A 502-amino-acid chain; its full sequence is Cytochrome P450 3A5 (502 aa).

Cysteine 441 serves as a coordination point for heme.

This sequence belongs to the cytochrome P450 family. Heme serves as cofactor.

Its subcellular location is the endoplasmic reticulum membrane. It localises to the microsome membrane. It catalyses the reaction an organic molecule + reduced [NADPH--hemoprotein reductase] + O2 = an alcohol + oxidized [NADPH--hemoprotein reductase] + H2O + H(+). It carries out the reaction 17beta-estradiol + reduced [NADPH--hemoprotein reductase] + O2 = 2-hydroxy-17beta-estradiol + oxidized [NADPH--hemoprotein reductase] + H2O + H(+). The catalysed reaction is 17beta-estradiol + reduced [NADPH--hemoprotein reductase] + O2 = 4-hydroxy-17beta-estradiol + oxidized [NADPH--hemoprotein reductase] + H2O + H(+). The enzyme catalyses estrone + reduced [NADPH--hemoprotein reductase] + O2 = 2-hydroxyestrone + oxidized [NADPH--hemoprotein reductase] + H2O + H(+). It catalyses the reaction estrone + reduced [NADPH--hemoprotein reductase] + O2 = 4-hydroxyestrone + oxidized [NADPH--hemoprotein reductase] + H2O + H(+). It carries out the reaction testosterone + reduced [NADPH--hemoprotein reductase] + O2 = 6beta,17beta-dihydroxyandrost-4-en-3-one + oxidized [NADPH--hemoprotein reductase] + H2O + H(+). The catalysed reaction is androst-4-ene-3,17-dione + reduced [NADPH--hemoprotein reductase] + O2 = 6beta-hydroxyandrost-4-ene-3,17-dione + oxidized [NADPH--hemoprotein reductase] + H2O + H(+). The enzyme catalyses progesterone + reduced [NADPH--hemoprotein reductase] + O2 = 6beta-hydroxyprogesterone + oxidized [NADPH--hemoprotein reductase] + H2O + H(+). It catalyses the reaction all-trans-retinol + reduced [NADPH--hemoprotein reductase] + O2 = all-trans-retinal + oxidized [NADPH--hemoprotein reductase] + 2 H2O + H(+). It carries out the reaction all-trans-retinoate + reduced [NADPH--hemoprotein reductase] + O2 = all-trans-4-hydroxyretinoate + oxidized [NADPH--hemoprotein reductase] + H2O + H(+). The protein operates within steroid hormone biosynthesis. It participates in cofactor metabolism; retinol metabolism. Its function is as follows. A cytochrome P450 monooxygenase involved in the metabolism of steroid hormones and vitamins. Mechanistically, uses molecular oxygen inserting one oxygen atom into a substrate, and reducing the second into a water molecule, with two electrons provided by NADPH via cytochrome P450 reductase (NADPH--hemoprotein reductase). Catalyzes the hydroxylation of carbon-hydrogen bonds. Exhibits high catalytic activity for the formation of catechol estrogens from 17beta-estradiol (E2) and estrone (E1), namely 2-hydroxy E1 and E2. Catalyzes 6beta-hydroxylation of the steroid hormones testosterone, progesterone, and androstenedione. Catalyzes the oxidative conversion of all-trans-retinol to all-trans-retinal, a rate-limiting step for the biosynthesis of all-trans-retinoic acid (atRA). Further metabolizes all trans-retinoic acid (atRA) to 4-hydroxyretinoate and may play a role in hepatic atRA clearance. Also involved in the oxidative metabolism of xenobiotics, including calcium channel blocking drug nifedipine and immunosuppressive drug cyclosporine. In Homo sapiens (Human), this protein is Cytochrome P450 3A5.